Reading from the N-terminus, the 114-residue chain is Probable divalent-cation tolerance protein cutA homolog (114 aa).

This sequence belongs to the CutA family. In terms of assembly, homotrimer.

The polypeptide is Probable divalent-cation tolerance protein cutA homolog (Encephalitozoon cuniculi (strain GB-M1) (Microsporidian parasite)).